Reading from the N-terminus, the 241-residue chain is MSLLSAIDTSAASVYQPAQLLNWVYLSLQDTHQASAFDAFRPEPPAGAAPPELAFGKGRPEQLGSPLHSSYLNSVFQLQRGEALSSSVYRNASPYGSLNNIADGLSSLTEHFSDLTLTSEARKPSKRPPPNYLCHLCFNKGHYIKDCPQARPKGEGLTPYQGKKRCFGEYKCPKCKRKWMSGNSWANMGQECIKCHINVYPHKQRPLEKPDGLDVSDQSKEHPQHLCEKCKVLGYYCRRVQ.

Phosphoserine is present on residues Ser65 and Ser93. Residues 132–149 form a CCHC-type zinc finger; sequence YLCHLCFNKGHYIKDCPQ.

The chain is Zinc finger CCHC domain-containing protein 24 from Mus musculus (Mouse).